The following is a 209-amino-acid chain: A-type ATP synthase subunit D (209 aa).

The protein belongs to the V-ATPase D subunit family. Has multiple subunits, A(3), B(3), C, D, E, F, G, I and K(x); there may be a few other subunits as well.

It is found in the cell membrane. In terms of biological role, component of the A-type ATP synthase that produces ATP from ADP in the presence of a proton gradient across the membrane. In Methanosarcina mazei (strain ATCC BAA-159 / DSM 3647 / Goe1 / Go1 / JCM 11833 / OCM 88) (Methanosarcina frisia), this protein is A-type ATP synthase subunit D.